Reading from the N-terminus, the 641-residue chain is Threonine--tRNA ligase (641 aa).

Positions 1–61 (MPVITLPDGS…ENDTELAIVT (61 aa)) constitute a TGS domain. The tract at residues 242–533 (DHRKIGKKLG…LIEEYEGAFP (292 aa)) is catalytic. Zn(2+)-binding residues include cysteine 333, histidine 384, and histidine 510.

This sequence belongs to the class-II aminoacyl-tRNA synthetase family. Homodimer. Zn(2+) is required as a cofactor.

The protein resides in the cytoplasm. The catalysed reaction is tRNA(Thr) + L-threonine + ATP = L-threonyl-tRNA(Thr) + AMP + diphosphate + H(+). Catalyzes the attachment of threonine to tRNA(Thr) in a two-step reaction: L-threonine is first activated by ATP to form Thr-AMP and then transferred to the acceptor end of tRNA(Thr). Also edits incorrectly charged L-seryl-tRNA(Thr). In Marinobacter nauticus (strain ATCC 700491 / DSM 11845 / VT8) (Marinobacter aquaeolei), this protein is Threonine--tRNA ligase.